The primary structure comprises 103 residues: Methane monooxygenase component D (103 aa).

As to quaternary structure, the soluble methane monooxygenase (sMMO) consists of four components A/MMOH (composed of alpha/MmoX, beta/MmoY and gamma/MmoZ), B/MMOB (MmoB), C/MMOR (MmoC) and D/MMOD (MmoD).

This is Methane monooxygenase component D (mmoD) from Methylococcus capsulatus (strain ATCC 33009 / NCIMB 11132 / Bath).